The chain runs to 30 residues: Photosystem I reaction center subunit XII (30 aa).

The chain crosses the membrane as a helical span at residues isoleucine 7–tyrosine 29.

The protein belongs to the PsaM family.

It is found in the plastid. The protein resides in the chloroplast thylakoid membrane. This chain is Photosystem I reaction center subunit XII, found in Phaeodactylum tricornutum (strain CCAP 1055/1).